A 224-amino-acid chain; its full sequence is Redox-sensing transcriptional repressor Rex (224 aa).

A DNA-binding region (H-T-H motif) is located at residues 17 to 56 (RYHRCLEELLKNDIKRISSKELSERMGVTASQIRQDLNNF). 91–96 (GAGNLG) serves as a coordination point for NAD(+).

This sequence belongs to the transcriptional regulatory Rex family. As to quaternary structure, homodimer.

It is found in the cytoplasm. In terms of biological role, modulates transcription in response to changes in cellular NADH/NAD(+) redox state. The polypeptide is Redox-sensing transcriptional repressor Rex (Caldanaerobacter subterraneus subsp. tengcongensis (strain DSM 15242 / JCM 11007 / NBRC 100824 / MB4) (Thermoanaerobacter tengcongensis)).